We begin with the raw amino-acid sequence, 52 residues long: Defensin D2 (52 aa).

Intrachain disulfides connect Cys8-Cys52, Cys19-Cys39, Cys25-Cys46, and Cys29-Cys48.

In terms of tissue distribution, distributed in the epidermal cell layer of leaves and in the subepidermal layer region of stems. Not in roots.

It is found in the secreted. Its subcellular location is the cell wall. Functionally, antimicrobial peptide. Active against Fusarium spp., Gram-positive and Gram-negative bacterial pathogens. The sequence is that of Defensin D2 from Spinacia oleracea (Spinach).